A 176-amino-acid chain; its full sequence is RNA pyrophosphohydrolase (176 aa).

The Nudix hydrolase domain occupies 6–149 (GYRPNVGIVI…KRDVYRRVMK (144 aa)). The Nudix box signature appears at 38-59 (GGINPGESAEQAMYRELFEEVG).

It belongs to the Nudix hydrolase family. RppH subfamily. A divalent metal cation is required as a cofactor.

Functionally, accelerates the degradation of transcripts by removing pyrophosphate from the 5'-end of triphosphorylated RNA, leading to a more labile monophosphorylated state that can stimulate subsequent ribonuclease cleavage. This is RNA pyrophosphohydrolase from Shigella boydii serotype 18 (strain CDC 3083-94 / BS512).